A 477-amino-acid chain; its full sequence is Bifunctional protein HldE (477 aa).

Positions 1–318 (MKVTLPEFER…ENAVRGRADT (318 aa)) are ribokinase. Residue K179 is modified to N6-acetyllysine. Residue 195-198 (NLSE) coordinates ATP. Residue D264 is part of the active site. A cytidylyltransferase region spans residues 344–477 (MTNGVFDILH…IKKIQQDKKG (134 aa)).

It in the N-terminal section; belongs to the carbohydrate kinase PfkB family. This sequence in the C-terminal section; belongs to the cytidylyltransferase family. In terms of assembly, homodimer.

It carries out the reaction D-glycero-beta-D-manno-heptose 7-phosphate + ATP = D-glycero-beta-D-manno-heptose 1,7-bisphosphate + ADP + H(+). The enzyme catalyses D-glycero-beta-D-manno-heptose 1-phosphate + ATP + H(+) = ADP-D-glycero-beta-D-manno-heptose + diphosphate. It functions in the pathway nucleotide-sugar biosynthesis; ADP-L-glycero-beta-D-manno-heptose biosynthesis; ADP-L-glycero-beta-D-manno-heptose from D-glycero-beta-D-manno-heptose 7-phosphate: step 1/4. It participates in nucleotide-sugar biosynthesis; ADP-L-glycero-beta-D-manno-heptose biosynthesis; ADP-L-glycero-beta-D-manno-heptose from D-glycero-beta-D-manno-heptose 7-phosphate: step 3/4. Functionally, catalyzes the phosphorylation of D-glycero-D-manno-heptose 7-phosphate at the C-1 position to selectively form D-glycero-beta-D-manno-heptose-1,7-bisphosphate. Catalyzes the ADP transfer from ATP to D-glycero-beta-D-manno-heptose 1-phosphate, yielding ADP-D-glycero-beta-D-manno-heptose. In Escherichia coli O9:H4 (strain HS), this protein is Bifunctional protein HldE.